The sequence spans 264 residues: ECF RNA polymerase sigma factor BldN (264 aa).

The not required for transcription in vitro stretch occupies residues 1–87; it reads MYPHVGVDAS…PAADSDSARM (87 aa). The segment at 64–83 is disordered; it reads RSSSSGAAATTHRRPAADSD. The segment at 105–172 is sigma-70 factor domain-2; it reads LYDQYSDTVY…LVADHFKSSR (68 aa). The Polymerase core binding signature appears at 129-132; it reads DLTS. A sigma-70 factor domain-4 region spans residues 204–255; sequence ALLDAVRRLNPQQQECVTLRFLQGLSVAETARVMGKNEGAIKTLQYRAVRTL.

Belongs to the sigma-70 factor family. ECF subfamily. In terms of processing, two forms of protein exist; a 35 kDa form in early growth and a 28 kDa form seen in later stages (at protein level). In liquid culture the larger form accumulates to higher level than on solid media. The shorter form results from processing just upstream of Met-87; the exact position is unknown. There are 4 possible start codons; mutation of the first prevents protein production while mutation of the other 3 (Val-44, Met-87 and Met-88) permits production of both forms. Introduction of stop codons between the first and second, or second and third possible start codons also prevents protein production, corroborating that the annotated start codon is the correct one.

In terms of biological role, sigma factors are initiation factors that promote the attachment of RNA polymerase to specific initiation sites and are then released. Extracytoplasmic function (ECF) sigma factors are usually held in an inactive form by an anti-sigma factor until released. ECF sigma factor involved in aerial mycelium formation, required for translation from the bldMp1 promoter. Expressed as a preprotein; processing and accumulation of the mature protein starts as aerial mycelium formation and sporulation commence. Activates expression of about 17 genes, including those for rdlA and most of the chaplins (chpA to chpH); chaplin activation is indirect. This chain is ECF RNA polymerase sigma factor BldN, found in Streptomyces coelicolor (strain ATCC BAA-471 / A3(2) / M145).